The primary structure comprises 785 residues: Semaphorin-3E (785 aa).

Residues 1 to 25 form the signal peptide; the sequence is MLGRMASAQDLLILALCGLLLELPA. The 485-residue stretch at 36-520 folds into the Sema domain; that stretch reads RLRLSHKELW…TESVIAQVKF (485 aa). Residue Asn-48 is glycosylated (N-linked (GlcNAc...) asparagine). A disulfide bond links Cys-109 and Cys-119. The N-linked (GlcNAc...) asparagine glycan is linked to Asn-130. Intrachain disulfides connect Cys-137–Cys-146, Cys-274–Cys-386, Cys-298–Cys-346, and Cys-523–Cys-541. An N-linked (GlcNAc...) asparagine glycan is attached at Asn-600. In terms of domain architecture, Ig-like C2-type spans 651 to 740; that stretch reads LDAGTYFCQT…EYCEKVWCTD (90 aa). Residues Cys-658 and Cys-733 are joined by a disulfide bond. Residues 744–785 form a disordered region; sequence KKLKMSPSKWKYANPQEKRQDQEKKARIRPEHYRLPRNIADS. A compositionally biased stretch (basic and acidic residues) spans 759-777; that stretch reads QEKRQDQEKKARIRPEHYR.

It belongs to the semaphorin family. In terms of tissue distribution, collapsin-1, -2, -3, and -5 bind to overlapping but distinct axon tracts.

It localises to the secreted. Functionally, plays an important role in signaling via the cell surface receptor PLXND1. Mediates reorganization of the actin cytoskeleton, leading to the retraction of cell projections. Promotes focal adhesion disassembly and inhibits adhesion of endothelial cells to the extracellular matrix. Regulates angiogenesis. Can down-regulate sprouting angiogenesis. Required for normal vascular patterning during embryogenesis. Induces the collapse and paralysis of neuronal growth cones. Plays an important role in ensuring the specificity of synapse formation. This is Semaphorin-3E (SEMA3E) from Gallus gallus (Chicken).